The sequence spans 297 residues: tRNA dimethylallyltransferase (297 aa).

Residue 15-22 (GPTASGKS) participates in ATP binding. Residue 17-22 (TASGKS) coordinates substrate. Interaction with substrate tRNA regions lie at residues 40 to 43 (DSMQ) and 164 to 168 (QRIVR).

The protein belongs to the IPP transferase family. Monomer. Mg(2+) serves as cofactor.

The enzyme catalyses adenosine(37) in tRNA + dimethylallyl diphosphate = N(6)-dimethylallyladenosine(37) in tRNA + diphosphate. Catalyzes the transfer of a dimethylallyl group onto the adenine at position 37 in tRNAs that read codons beginning with uridine, leading to the formation of N6-(dimethylallyl)adenosine (i(6)A). This Rhizobium leguminosarum bv. trifolii (strain WSM2304) protein is tRNA dimethylallyltransferase.